We begin with the raw amino-acid sequence, 232 residues long: Putative N-acetylmannosamine-6-phosphate 2-epimerase (232 aa).

The protein belongs to the NanE family.

The enzyme catalyses an N-acyl-D-glucosamine 6-phosphate = an N-acyl-D-mannosamine 6-phosphate. It functions in the pathway amino-sugar metabolism; N-acetylneuraminate degradation; D-fructose 6-phosphate from N-acetylneuraminate: step 3/5. In terms of biological role, converts N-acetylmannosamine-6-phosphate (ManNAc-6-P) to N-acetylglucosamine-6-phosphate (GlcNAc-6-P). The chain is Putative N-acetylmannosamine-6-phosphate 2-epimerase from Borreliella afzelii (strain PKo) (Borrelia afzelii).